The sequence spans 362 residues: MITNKVKTLILVNLGGPRTPSEIEVFLRDLFSDPFVFDLPLPEFLRLRLARFIAKKRAPKVQKSYESMGFGGGSPLVEETAKQAHALELALNERSSEQWNVKVAMACGYPNMRDIEFGKPNQDTVYLPLYPQFSRSTVLSTLAILETKFGECPVGSGGYVPHFGLDPNFHSISAKFIYEFFTNQLPKDQYLHYPEEKPNCDWRNLDLVFSAHGVPMRLIHKGDRYMEEVELSVKGIADELSKFGFNGGVHISYQSKVGPAKWTEPSTIQMISSLAKQGKHIAVYPISFVSDHLETLEEIGEQFKDLTWEMGGKSFVRIPALGIYPSFIQFLAEKVMHSDRKIQHCICREKGGESLQHCRFKD.

Residues His212 and Glu294 each coordinate Fe cation.

It belongs to the ferrochelatase family.

The protein localises to the cytoplasm. The enzyme catalyses heme b + 2 H(+) = protoporphyrin IX + Fe(2+). It participates in porphyrin-containing compound metabolism; protoheme biosynthesis; protoheme from protoporphyrin-IX: step 1/1. Its function is as follows. Catalyzes the ferrous insertion into protoporphyrin IX. The chain is Ferrochelatase from Leptospira biflexa serovar Patoc (strain Patoc 1 / Ames).